We begin with the raw amino-acid sequence, 299 residues long: ATP phosphoribosyltransferase (299 aa).

This sequence belongs to the ATP phosphoribosyltransferase family. Long subfamily. As to quaternary structure, equilibrium between an active dimeric form, an inactive hexameric form and higher aggregates. Interconversion between the various forms is largely reversible and is influenced by the natural substrates and inhibitors of the enzyme. The cofactor is Mg(2+).

The protein localises to the cytoplasm. It carries out the reaction 1-(5-phospho-beta-D-ribosyl)-ATP + diphosphate = 5-phospho-alpha-D-ribose 1-diphosphate + ATP. It participates in amino-acid biosynthesis; L-histidine biosynthesis; L-histidine from 5-phospho-alpha-D-ribose 1-diphosphate: step 1/9. Feedback inhibited by histidine. Its function is as follows. Catalyzes the condensation of ATP and 5-phosphoribose 1-diphosphate to form N'-(5'-phosphoribosyl)-ATP (PR-ATP). Has a crucial role in the pathway because the rate of histidine biosynthesis seems to be controlled primarily by regulation of HisG enzymatic activity. The sequence is that of ATP phosphoribosyltransferase from Escherichia coli O17:K52:H18 (strain UMN026 / ExPEC).